Here is a 55-residue protein sequence, read N- to C-terminus: U17-myrmicitoxin-Mri1b (55 aa).

The N-terminal stretch at 1 to 31 is a signal peptide; the sequence is MENSRTSTFTAYVTVAFLLISTFVTMVVTES. Gln32 carries the post-translational modification Pyrrolidone carboxylic acid.

Post-translationally, contains 1 disulfide bond. In terms of tissue distribution, expressed by the venom gland.

It localises to the secreted. This Manica rubida (European giant red ant) protein is U17-myrmicitoxin-Mri1b.